The primary structure comprises 362 residues: Heat-inducible transcription repressor HrcA (362 aa).

The protein belongs to the HrcA family.

Its function is as follows. Negative regulator of class I heat shock genes (grpE-dnaK-dnaJ and groELS operons). Prevents heat-shock induction of these operons. The chain is Heat-inducible transcription repressor HrcA from Rhizobium rhizogenes (strain K84 / ATCC BAA-868) (Agrobacterium radiobacter).